The chain runs to 373 residues: Histone-lysine N-methyltransferase SETD7 (373 aa).

The interval 1–20 is disordered; sequence MDSDDDNMEEVVEGPLDEDD. MORN repeat units lie at residues 36 to 58, 59 to 81, and 106 to 128; these read FEGHFVHGEKNGKGKFFFFDGST, LEGFYVDDALQGQGVYTYEDGGA, and FRGRYKDNIRYGMCWVYYPDGAC. The SET domain maps to 214–336; the sequence is QRVYVGQSLI…KDEELTVAYG (123 aa). S-adenosyl-L-methionine-binding positions include 226 to 228, Asn296, and His297; that span reads AGE.

It belongs to the class V-like SAM-binding methyltransferase superfamily. Histone-lysine methyltransferase family. SET7 subfamily.

It is found in the nucleus. The protein localises to the chromosome. The enzyme catalyses L-lysyl(4)-[histone H3] + S-adenosyl-L-methionine = N(6)-methyl-L-lysyl(4)-[histone H3] + S-adenosyl-L-homocysteine + H(+). It carries out the reaction L-lysyl-[protein] + S-adenosyl-L-methionine = N(6)-methyl-L-lysyl-[protein] + S-adenosyl-L-homocysteine + H(+). Functionally, histone methyltransferase that specifically monomethylates 'Lys-4' of histone H3. H3 'Lys-4' methylation represents a specific tag for epigenetic transcriptional activation. Plays a central role in the transcriptional activation of genes. Also has methyltransferase activity toward non-histone proteins. The chain is Histone-lysine N-methyltransferase SETD7 (setd7) from Danio rerio (Zebrafish).